Reading from the N-terminus, the 161-residue chain is Protein-export protein SecB (161 aa).

This sequence belongs to the SecB family. As to quaternary structure, homotetramer, a dimer of dimers. One homotetramer interacts with 1 SecA dimer.

Its subcellular location is the cytoplasm. One of the proteins required for the normal export of preproteins out of the cell cytoplasm. It is a molecular chaperone that binds to a subset of precursor proteins, maintaining them in a translocation-competent state. It also specifically binds to its receptor SecA. This chain is Protein-export protein SecB, found in Coxiella burnetii (strain Dugway 5J108-111).